We begin with the raw amino-acid sequence, 98 residues long: NADH-ubiquinone oxidoreductase chain 4L (98 aa).

A run of 3 helical transmembrane segments spans residues 2–22 (TQAS…TLIF), 29–49 (TLLC…MTAL), and 61–81 (IVML…LAMI).

Belongs to the complex I subunit 4L family. In terms of assembly, core subunit of respiratory chain NADH dehydrogenase (Complex I) which is composed of 45 different subunits.

It localises to the mitochondrion inner membrane. It carries out the reaction a ubiquinone + NADH + 5 H(+)(in) = a ubiquinol + NAD(+) + 4 H(+)(out). In terms of biological role, core subunit of the mitochondrial membrane respiratory chain NADH dehydrogenase (Complex I) which catalyzes electron transfer from NADH through the respiratory chain, using ubiquinone as an electron acceptor. Part of the enzyme membrane arm which is embedded in the lipid bilayer and involved in proton translocation. In Calomys musculinus (Drylands vesper mouse), this protein is NADH-ubiquinone oxidoreductase chain 4L (MT-ND4L).